We begin with the raw amino-acid sequence, 492 residues long: MTDLTSLTLAEARDGLARKSFTALELTEAHLTAIEAARGLNAFVLETPEQARKMAQAADAQIATGDGGPLAGIPLGIKDLFATKDTRTTACSKILGDFHPPYESTVTTQLWRDGAVMVGKLNNDEFAMGSSNETSCFGPVVNPWRRAGSETKLVPGGSSGGSAAAVAAGLCLGATATDTGGSIRQPAAFTGTVGIKPTYGRCSRWGIVAFASSLDQAGPIARTVRDSAILLRSMAGHDPKDTTSVDRPVPNYETAIGASVKGMKIGIPKEYRLEGMPPEIERLWTQGAEWLKASGAELVEVSLPHTKYALPAYYIVAPAEASSNLARYDGVRYGARVNGRNIVEMYENTRAAGFGAEVKRRIMIGTYVLSAGYYDAYYLRAQKVRTLIKRDFEQCFDQGVSAILTPATPSAAFGIGEKGGADPVEMYLNDIFTVTVNMAGLPGIAVPAGADGQGLPLGLQLIGRPFDEETLFSLGEVIEQAAGRFTPKKWWA.

Active-site charge relay system residues include Lys78 and Ser158. The Acyl-ester intermediate role is filled by Ser182.

Belongs to the amidase family. GatA subfamily. As to quaternary structure, heterotrimer of A, B and C subunits.

The catalysed reaction is L-glutamyl-tRNA(Gln) + L-glutamine + ATP + H2O = L-glutaminyl-tRNA(Gln) + L-glutamate + ADP + phosphate + H(+). In terms of biological role, allows the formation of correctly charged Gln-tRNA(Gln) through the transamidation of misacylated Glu-tRNA(Gln) in organisms which lack glutaminyl-tRNA synthetase. The reaction takes place in the presence of glutamine and ATP through an activated gamma-phospho-Glu-tRNA(Gln). This Rhodopseudomonas palustris (strain BisB5) protein is Glutamyl-tRNA(Gln) amidotransferase subunit A.